We begin with the raw amino-acid sequence, 461 residues long: Cysteine--tRNA ligase (461 aa).

Cys-28 is a Zn(2+) binding site. Residues 30-40 carry the 'HIGH' region motif; that stretch reads VTIYDLCHIGH. Residues Cys-209, His-234, and Glu-238 each contribute to the Zn(2+) site. The short motif at 266-270 is the 'KMSKS' region element; the sequence is KMSKS. An ATP-binding site is contributed by Lys-269.

The protein belongs to the class-I aminoacyl-tRNA synthetase family. In terms of assembly, monomer. Requires Zn(2+) as cofactor.

It is found in the cytoplasm. It carries out the reaction tRNA(Cys) + L-cysteine + ATP = L-cysteinyl-tRNA(Cys) + AMP + diphosphate. The polypeptide is Cysteine--tRNA ligase (Vibrio atlanticus (strain LGP32) (Vibrio splendidus (strain Mel32))).